Reading from the N-terminus, the 89-residue chain is Small ribosomal subunit protein uS19 (89 aa).

The protein belongs to the universal ribosomal protein uS19 family.

Protein S19 forms a complex with S13 that binds strongly to the 16S ribosomal RNA. The sequence is that of Small ribosomal subunit protein uS19 from Xanthomonas campestris pv. campestris (strain 8004).